Here is a 494-residue protein sequence, read N- to C-terminus: PIGF/3-ketodihydrosphingosine reductase fusion protein (494 aa).

3 residues coordinate NADPH: glycine 20, serine 22, and glycine 24. The short motif at 20–24 (GGSQG) is the GXSXG element. NADP(+) is bound at residue leucine 25. 2 residues coordinate NADPH: arginine 45 and lysine 49. Valine 54 serves as a coordination point for NADP(+). Positions 74 and 75 each coordinate NADPH. A helical membrane pass occupies residues 148 to 168 (ILLVGSLLSSLPIIGYSAYSP). NADP(+) is bound by residues tyrosine 166, lysine 170, and isoleucine 199. The Proton acceptor role is filled by tyrosine 166. Lysine 170 acts as the Lowers pKa of active site Tyr in catalysis. Helical transmembrane passes span 264–284 (HDNPILEYLFALVSLLAWPFY), 312–332 (IFTLLLTFTQLTIFYLSLNCL), 370–390 (LAGAASMLIGSLLISFILVAF), 402–422 (YFCALTLSVFTVYPLASTLAF), 444–464 (LRSWGPIIGAWFGAFPIPLDW), and 473–493 (ITIVIGAFLGYAFAAIVGEIL).

The protein in the N-terminal section; belongs to the short-chain dehydrogenases/reductases (SDR) family. This sequence in the C-terminal section; belongs to the PIGF family.

It is found in the endoplasmic reticulum membrane. It catalyses the reaction sphinganine + NADP(+) = 3-oxosphinganine + NADPH + H(+). It functions in the pathway glycolipid biosynthesis; glycosylphosphatidylinositol-anchor biosynthesis. It participates in lipid metabolism; sphingolipid metabolism. Its function is as follows. Acts in the GPI biosynthetic pathway between GlcNAc-PI synthesis and GPI transfer to protein. Required for the formation of complete GPI precursors CP1 and CP2. Catalyzes the reduction of 3'-oxosphinganine (3-ketodihydrosphingosine/KDS) to sphinganine (dihydrosphingosine/DHS), the second step of de novo sphingolipid biosynthesis. The chain is PIGF/3-ketodihydrosphingosine reductase fusion protein from Schizosaccharomyces pombe (strain 972 / ATCC 24843) (Fission yeast).